We begin with the raw amino-acid sequence, 78 residues long: Acyl carrier protein (78 aa).

In terms of domain architecture, Carrier spans 2 to 77 (SDIEQRVKQA…SAIDYVTKKL (76 aa)). At S37 the chain carries O-(pantetheine 4'-phosphoryl)serine.

This sequence belongs to the acyl carrier protein (ACP) family. Post-translationally, 4'-phosphopantetheine is transferred from CoA to a specific serine of apo-ACP by AcpS. This modification is essential for activity because fatty acids are bound in thioester linkage to the sulfhydryl of the prosthetic group.

The protein resides in the cytoplasm. Its pathway is lipid metabolism; fatty acid biosynthesis. Functionally, carrier of the growing fatty acid chain in fatty acid biosynthesis. This is Acyl carrier protein from Acinetobacter baylyi (strain ATCC 33305 / BD413 / ADP1).